A 210-amino-acid polypeptide reads, in one-letter code: Fimbriae Z protein (210 aa).

One can recognise a Response regulatory domain in the interval 5–121 (SVIIMDTHPI…DIFHAVQMIL (117 aa)). 4-aspartylphosphate is present on D56. The region spanning 143-208 (NSSTVTVLSN…ELIDYAKLYE (66 aa)) is the HTH luxR-type domain. A DNA-binding region (H-T-H motif) is located at residues 167-186 (NKEIADKLLLSNKTVSAHKS).

It is found in the cytoplasm. In Escherichia coli O157:H7, this protein is Fimbriae Z protein (fimZ).